The sequence spans 96 residues: Transcription and mRNA export factor ENY2 (96 aa).

The protein belongs to the ENY2 family. Component of the nuclear pore complex (NPC)-associated TREX-2 complex (transcription and export complex 2). Component of the SAGA transcription coactivator-HAT complex. Within the SAGA complex, participates in a subcomplex of SAGA called the DUB module (deubiquitination module).

It localises to the nucleus. The protein resides in the nucleoplasm. In terms of biological role, involved in mRNA export coupled transcription activation by association with both the TREX-2 and the SAGA complexes. The transcription regulatory histone acetylation (HAT) complex SAGA is a multiprotein complex that activates transcription by remodeling chromatin and mediating histone acetylation and deubiquitination. Within the SAGA complex, participates in a subcomplex that specifically deubiquitinates histones. The SAGA complex is recruited to specific gene promoters by activators, where it is required for transcription. The TREX-2 complex functions in docking export-competent ribonucleoprotein particles (mRNPs) to the nuclear entrance of the nuclear pore complex (nuclear basket). TREX-2 participates in mRNA export and accurate chromatin positioning in the nucleus by tethering genes to the nuclear periphery. In Taeniopygia guttata (Zebra finch), this protein is Transcription and mRNA export factor ENY2.